The sequence spans 517 residues: Putative thymidine phosphorylase (517 aa).

This sequence belongs to the thymidine/pyrimidine-nucleoside phosphorylase family. Type 2 subfamily.

It carries out the reaction thymidine + phosphate = 2-deoxy-alpha-D-ribose 1-phosphate + thymine. The polypeptide is Putative thymidine phosphorylase (Legionella pneumophila (strain Corby)).